The following is an 884-amino-acid chain: Protein translocase subunit SecA (884 aa).

ATP-binding positions include Gln-83, 101–105, and Asp-491; that span reads GEGKT.

This sequence belongs to the SecA family.

The protein localises to the plastid. The protein resides in the chloroplast stroma. It localises to the chloroplast thylakoid membrane. It catalyses the reaction ATP + H2O + cellular proteinSide 1 = ADP + phosphate + cellular proteinSide 2.. Functionally, has a central role in coupling the hydrolysis of ATP to the transfer of proteins across the thylakoid membrane. In Pyropia yezoensis (Susabi-nori), this protein is Protein translocase subunit SecA.